The following is a 412-amino-acid chain: Serine hydroxymethyltransferase (412 aa).

Residues L117 and 121 to 123 contribute to the (6S)-5,6,7,8-tetrahydrofolate site; that span reads GHL. K226 is modified (N6-(pyridoxal phosphate)lysine). (6S)-5,6,7,8-tetrahydrofolate is bound by residues E242 and 350–352; that span reads SPF.

It belongs to the SHMT family. Homodimer. The cofactor is pyridoxal 5'-phosphate.

The protein resides in the cytoplasm. It catalyses the reaction (6R)-5,10-methylene-5,6,7,8-tetrahydrofolate + glycine + H2O = (6S)-5,6,7,8-tetrahydrofolate + L-serine. It functions in the pathway one-carbon metabolism; tetrahydrofolate interconversion. Its pathway is amino-acid biosynthesis; glycine biosynthesis; glycine from L-serine: step 1/1. Functionally, catalyzes the reversible interconversion of serine and glycine with tetrahydrofolate (THF) serving as the one-carbon carrier. Appears to be specific for THF as the pteridine substrate, since the use of tetrahydromethanopterin (H4MPT) is much less efficient. Also exhibits THF-independent aldolase activity toward beta-hydroxyamino acids, producing glycine and aldehydes, via a retro-aldol mechanism. Thus, is able to catalyze the cleavage of L-allo-threonine and L-threo-beta-phenylserine. This Methanosarcina barkeri (strain Fusaro / DSM 804) protein is Serine hydroxymethyltransferase.